Reading from the N-terminus, the 179-residue chain is Segregation and condensation protein B (179 aa).

It belongs to the ScpB family. Homodimer. Homodimerization may be required to stabilize the binding of ScpA to the Smc head domains. Component of a cohesin-like complex composed of ScpA, ScpB and the Smc homodimer, in which ScpA and ScpB bind to the head domain of Smc. The presence of the three proteins is required for the association of the complex with DNA.

The protein localises to the cytoplasm. Its function is as follows. Participates in chromosomal partition during cell division. May act via the formation of a condensin-like complex containing Smc and ScpA that pull DNA away from mid-cell into both cell halves. This Streptococcus equi subsp. zooepidemicus (strain H70) protein is Segregation and condensation protein B.